The chain runs to 209 residues: Uracil phosphoribosyltransferase (209 aa).

5-phospho-alpha-D-ribose 1-diphosphate contacts are provided by residues R79, R104, and 131–139 (DPMLATGGS). Uracil is bound by residues I194 and 199–201 (GDA). D200 lines the 5-phospho-alpha-D-ribose 1-diphosphate pocket.

This sequence belongs to the UPRTase family. The cofactor is Mg(2+).

It carries out the reaction UMP + diphosphate = 5-phospho-alpha-D-ribose 1-diphosphate + uracil. The protein operates within pyrimidine metabolism; UMP biosynthesis via salvage pathway; UMP from uracil: step 1/1. With respect to regulation, allosterically activated by GTP. In terms of biological role, catalyzes the conversion of uracil and 5-phospho-alpha-D-ribose 1-diphosphate (PRPP) to UMP and diphosphate. The chain is Uracil phosphoribosyltransferase from Latilactobacillus sakei (Lactobacillus sakei).